The chain runs to 409 residues: Microfibrillar-associated protein 3-like (409 aa).

The first 28 residues, 1 to 28, serve as a signal peptide directing secretion; it reads MGLQKSHLTVCLPPSVPFLILVSTLATA. Residues 29-148 lie on the Extracellular side of the membrane; that stretch reads KSVTNSTLNG…TLRVIFTSGD (120 aa). Residues N33, N37, N67, N111, and N135 are each glycosylated (N-linked (GlcNAc...) asparagine). The Ig-like C2-type domain maps to 47–141; that stretch reads PVIIARTDHI…GTINNTVTLR (95 aa). Cysteines 68 and 125 form a disulfide. Residues 149-169 traverse the membrane as a helical segment; sequence MGVYYMVVCLVAFTIVMILNI. Over 170–409 the chain is Cytoplasmic; that stretch reads TRLCMMSSHL…NTCIIYESHV (240 aa). A Phosphotyrosine modification is found at Y287. Residues S298, S303, S306, and S307 each carry the phosphoserine modification. The disordered stretch occupies residues 319-395; that stretch reads VSVHPQSKRD…AHLETTEPAV (77 aa). Residues 325–340 are compositionally biased toward basic and acidic residues; sequence SKRDHVDDQEGGHFEV. The span at 356-373 shows a compositional bias: low complexity; it reads TAEPSTDITTTELTSEET.

It localises to the cell membrane. Its subcellular location is the nucleus. The protein localises to the cytoplasm. Its function is as follows. May participate in the nuclear signaling of EGFR and MAPK1/ERK2. The protein is Microfibrillar-associated protein 3-like (Mfap3l) of Mus musculus (Mouse).